The chain runs to 79 residues: MSEIADKVKKIVVEHLGVEESKVTPEASFIDDLGADSLDTVELVMAFEEAFSVEIPEDAAEKIATVKDAIDYIEKQKAA.

A Carrier domain is found at 2 to 77 (SEIADKVKKI…DAIDYIEKQK (76 aa)). Residue Ser37 is modified to O-(pantetheine 4'-phosphoryl)serine.

The protein belongs to the acyl carrier protein (ACP) family. Post-translationally, 4'-phosphopantetheine is transferred from CoA to a specific serine of apo-ACP by AcpS. This modification is essential for activity because fatty acids are bound in thioester linkage to the sulfhydryl of the prosthetic group.

Its subcellular location is the cytoplasm. It participates in lipid metabolism; fatty acid biosynthesis. In terms of biological role, carrier of the growing fatty acid chain in fatty acid biosynthesis. This chain is Acyl carrier protein, found in Gluconacetobacter diazotrophicus (strain ATCC 49037 / DSM 5601 / CCUG 37298 / CIP 103539 / LMG 7603 / PAl5).